We begin with the raw amino-acid sequence, 369 residues long: Dihydroorotate dehydrogenase (quinone) (369 aa).

Residues 76–80 and threonine 100 each bind FMN; that span reads AGLDK. Lysine 80 is a substrate binding site. 125 to 129 serves as a coordination point for substrate; that stretch reads NRMGF. FMN is bound by residues asparagine 154 and asparagine 187. Substrate is bound at residue asparagine 187. Serine 190 acts as the Nucleophile in catalysis. Asparagine 192 provides a ligand contact to substrate. 2 residues coordinate FMN: lysine 232 and serine 260. 261–262 contributes to the substrate binding site; that stretch reads NT. FMN contacts are provided by residues glycine 282, glycine 311, and 332 to 333; that span reads YS.

Belongs to the dihydroorotate dehydrogenase family. Type 2 subfamily. Monomer. It depends on FMN as a cofactor.

It localises to the cell membrane. It catalyses the reaction (S)-dihydroorotate + a quinone = orotate + a quinol. It functions in the pathway pyrimidine metabolism; UMP biosynthesis via de novo pathway; orotate from (S)-dihydroorotate (quinone route): step 1/1. In terms of biological role, catalyzes the conversion of dihydroorotate to orotate with quinone as electron acceptor. The protein is Dihydroorotate dehydrogenase (quinone) (pyrD) of Deinococcus radiodurans (strain ATCC 13939 / DSM 20539 / JCM 16871 / CCUG 27074 / LMG 4051 / NBRC 15346 / NCIMB 9279 / VKM B-1422 / R1).